Consider the following 431-residue polypeptide: Glutamyl-tRNA(Gln) amidotransferase subunit A (431 aa).

Active-site charge relay system residues include K55 and S130. S154 functions as the Acyl-ester intermediate in the catalytic mechanism.

It belongs to the amidase family. GatA subfamily. In terms of assembly, heterotrimer of A, B and C subunits.

It carries out the reaction L-glutamyl-tRNA(Gln) + L-glutamine + ATP + H2O = L-glutaminyl-tRNA(Gln) + L-glutamate + ADP + phosphate + H(+). Allows the formation of correctly charged Gln-tRNA(Gln) through the transamidation of misacylated Glu-tRNA(Gln) in organisms which lack glutaminyl-tRNA synthetase. The reaction takes place in the presence of glutamine and ATP through an activated gamma-phospho-Glu-tRNA(Gln). The polypeptide is Glutamyl-tRNA(Gln) amidotransferase subunit A (Methanococcus maripaludis (strain C7 / ATCC BAA-1331)).